The following is a 35-amino-acid chain: Kappa-stichotoxin-She3a (35 aa).

Positions Cys3 to Cys35 constitute a ShKT domain. 3 cysteine pairs are disulfide-bonded: Cys3–Cys35, Cys12–Cys28, and Cys17–Cys32.

Belongs to the sea anemone type 1 potassium channel toxin family. Type 1a subfamily.

It localises to the secreted. The protein localises to the nematocyst. Peptide with both antimicrobial and neurotoxin activities. Inhibits voltage-dependent potassium channels. Potently blocks Kv1.1/KCNA1 (IC(50)=6.7-87 pM) and Kv1.3/KCNA3 (IC(50)=10-250 pM). Less potently blocks Kv1.4/KCNA4 (IC(50)=0.31 nM), and Kv1.6/KCNA6 (IC(50)=0.16 nM). Shows moderate activity on Kv1.2/KCNA2 (IC(50)=9 nM), Kv1.7/KCNA7 (IC(50)=11.5 nM), and KCa3.1/KCNN4 (Kd=0.03-30 nM). Blocks Kv channels by binding to a shallow vestibule at the outer entrance to the ion conduction pathway and occluding the entrance to the pore. Shows antibacterial activity against all tested bacteria (the Gram-positive bacteria B.subtilis and S.aureus, and the Gram-negative bacteria S.typhimurium and P.aeruginosa). This Stichodactyla helianthus (Sun anemone) protein is Kappa-stichotoxin-She3a.